The chain runs to 149 residues: Nascent polypeptide-associated complex subunit beta-2 (149 aa).

Residues 38–103 enclose the NAC-A/B domain; sequence DKDNTKLQAE…PKENTLNGLY (66 aa).

Belongs to the NAC-beta family. In terms of assembly, part of the nascent polypeptide-associated complex (NAC), consisting of EGD2 and either EGD1 or BTT1. NAC associates with ribosomes via EGD1 or BTT1.

It is found in the cytoplasm. Its subcellular location is the nucleus. Functionally, acts as a component of the nascent polypeptide-associated complex (NAC), which promotes mitochondrial protein import by enhancing productive ribosome interactions with the outer mitochondrial membrane. Also blocks the inappropriate interaction of ribosomes translating non-secretory nascent polypeptides with translocation sites in the membrane of the endoplasmic reticulum. BTT1 may act as a transcription factor that exert a negative effect on the expression of several genes that are transcribed by RNA polymerase II. The protein is Nascent polypeptide-associated complex subunit beta-2 (BTT1) of Saccharomyces cerevisiae (strain ATCC 204508 / S288c) (Baker's yeast).